A 768-amino-acid chain; its full sequence is Protein STRUBBELIG (768 aa).

Residues 1 to 24 (MSFTRWEVFFGLSVLALTMPFSAG) form the signal peptide. Residues 25–341 (VTNLRDVSAI…GSGKFWSTQR (317 aa)) lie on the Extracellular side of the membrane. Cysteines 57 and 66 form a disulfide. Residue asparagine 70 is glycosylated (N-linked (GlcNAc...) asparagine). 6 LRR repeats span residues 94-115 (SIQV…ALPS), 116-139 (SIRN…SFLS), 140-162 (DLSE…FQQL), 164-186 (KLTK…MGDL), 188-210 (SLKI…EDLF), and 211-231 (LTDL…NLLK). An N-linked (GlcNAc...) asparagine glycan is attached at asparagine 119. Residues 241–334 (PFNTSIITPP…ISPPSGSGSG (94 aa)) form a disordered region. The N-linked (GlcNAc...) asparagine glycan is linked to asparagine 243. 2 stretches are compositionally biased toward pro residues: residues 248 to 283 (TPPP…PFAP) and 291 to 301 (QHPPPSPPLVW). The segment covering 315–334 (NSVSGQPTLQISPPSGSGSG) has biased composition (polar residues). A helical membrane pass occupies residues 342 to 362 (IILVVSSVAIIVLVSGLCVTL). The Cytoplasmic segment spans residues 363–768 (WRCCRSKIYN…EIVQDLQHMI (406 aa)). Positions 385 to 477 (PYFNKPPSQP…RAAHFPPGLN (93 aa)) are disordered. Positions 439-464 (SYYNKDVNTPQKPLQQPPRQFQSNDT) are enriched in polar residues. In terms of domain architecture, Protein kinase spans 497 to 768 (FSEENIIGEG…EIVQDLQHMI (272 aa)). ATP-binding positions include 503–511 (IGEGSIGNV) and lysine 525.

Belongs to the protein kinase superfamily. Ser/Thr protein kinase family. Interacts (via intra-cellular domain) with AN; this interaction is not required for correct subcellular localization and recycling of SUB. Binds to QKY and POQ at the plasma membrane. Binds to QKY at plasmodesmata (PD) in root epidermal cells to promote tissue morphogenesis. In terms of tissue distribution, expressed in leaves, stems, inflorescences, flower buds and developing root epidermis.

Its subcellular location is the cell membrane. The protein localises to the cell junction. It is found in the plasmodesma. With respect to regulation, regulated at the post-transcriptional level. In terms of biological role, regulates the expression of transcription factors that define the cell fates. Acts in a non-cell-autonomous fashion, functions in a radial inside-out signaling process, and mediates cell morphogenesis and cell fate across clonally distinct cell layers in floral primordia, developing ovules, and root meristems. Seems to be required for the regulation of cell shape and the orientation of the mitotic division plane. Involved in root hair specification, in the formation of the outer integument and the shape of organs such as carpels and petals and is necessary for the shape and height of the stem. Non-functional SUB proteins are retained in the endoplasmic reticulum and degraded by endoplasmic reticulum-associated degradation (ERAD). Collaboratively with QKY and POQ, regulates cell growth anisotropy during gynoecium development, thus linking together cell-cell communication and cellular growth. Together with QKY, links RLK-dependent signal transduction and intercellular communication mediated by plasmodesmata (PD) to regulate tissue morphogenesis. This chain is Protein STRUBBELIG, found in Arabidopsis thaliana (Mouse-ear cress).